Reading from the N-terminus, the 493-residue chain is MLELPIISISIFLPLISVLYILLFISQSKKADKPIYVMYVAVLSSVLTFISTIYILIEFDSSNPAYQFVERYAWLDKIGLEFHVGVDGISILFVVLTSFLTLICIIGSLFTVKKYIKEYLVCFLLMESFCIGAFTSVNLLLFYLFFEAILVPMYIIIGVWGGKNRIYAALKFFLYTFFGSVFFLLSLIYIYSKMHSFDLTYIFQLTDNIPLFAQQILWWAIFIAFAVKIPIIPFHTWLPDAHVQAPTSGSVILAGILLKLGGYGFLRVLLPLCPSVSQEFAIYVIYLSVIAIIYASLVALAQKDMKKMIAYSSIAHMGYVTIGIFSFTKAGVSGAIFQMLSHGVISSCLFLIVGTLYERLHTKEIAKYGGVASKMPVLAAFFMIAMLGSVGLPGTSGFIGEFLSLLGIYKVNVVATFIAALGIIFGAVYMLKLYKEVMLGEITNKEIMHFRDLYKYEIISIAPLILLIIYFGLMPSSILNVFSLSVENLLVKF.

The next 14 membrane-spanning stretches (helical) occupy residues proline 5–isoleucine 25, valine 37–isoleucine 57, isoleucine 89–leucine 109, tyrosine 115–threonine 135, leucine 139–valine 159, phenylalanine 172–serine 192, isoleucine 216–threonine 236, valine 251–proline 271, phenylalanine 280–leucine 300, methionine 308–threonine 328, glycine 334–glycine 354, methionine 375–threonine 395, valine 411–leucine 431, and isoleucine 458–isoleucine 478.

The protein belongs to the complex I subunit 4 family.

It localises to the cell membrane. It catalyses the reaction a quinone + NADH + 5 H(+)(in) = a quinol + NAD(+) + 4 H(+)(out). NDH-1 shuttles electrons from NADH, via FMN and iron-sulfur (Fe-S) centers, to quinones in the respiratory chain. Couples the redox reaction to proton translocation (for every two electrons transferred, four hydrogen ions are translocated across the cytoplasmic membrane), and thus conserves the redox energy in a proton gradient. This Rickettsia conorii (strain ATCC VR-613 / Malish 7) protein is NADH-quinone oxidoreductase subunit M (nuoM).